Here is a 229-residue protein sequence, read N- to C-terminus: C-&gt;U-editing enzyme APOBEC-1 (229 aa).

The region spanning 10–134 is the CMP/dCMP-type deaminase domain; the sequence is VDPTLRRRIE…PRNRQGLRDL (125 aa). Residue H61 coordinates Zn(2+). The active-site Proton donor is the E63. Zn(2+) is bound by residues C93 and C96.

Belongs to the cytidine and deoxycytidylate deaminase family. In terms of assembly, homodimer. Interacts with A1CF; form an mRNA editing complex. Interacts with RBM47; form an mRNA editing complex. Found in a complex with CELF2/CUGBP2 and A1CF. Interacts with HNRPAB. Interacts with SYNCRIP. Zn(2+) serves as cofactor. Expressed in the liver as well as small intestine.

It localises to the cytoplasm. It is found in the nucleus. It catalyses the reaction a cytidine in mRNA + H2O + H(+) = a uridine in mRNA + NH4(+). The catalysed reaction is cytidine(6666) in apoB mRNA + H2O + H(+) = uridine(6666) in apoB mRNA + NH4(+). Its function is as follows. Cytidine deaminase catalyzing the cytidine to uridine postranscriptional editing of a variety of mRNAs. Form complexes with cofactors that confer differential editing activity and selectivity. Responsible for the postranscriptional editing of a CAA codon for Gln to a UAA codon for stop in the apolipoprotein B mRNA. Also involved in CGA (Arg) to UGA (Stop) editing in the NF1 mRNA. May also play a role in the epigenetic regulation of gene expression by participating in DNA demethylation. The sequence is that of C-&gt;U-editing enzyme APOBEC-1 from Rattus norvegicus (Rat).